The primary structure comprises 149 residues: Calmodulin-1 (149 aa).

An N-acetylalanine modification is found at A2. 4 consecutive EF-hand domains span residues 8–43 (EQIA…LGQN), 44–79 (PTEA…KMKD), 81–116 (DSEE…LGEK), and 117–149 (LTDE…MTAK). D21 contributes to the Ca(2+) binding site. An N6-acetyllysine; alternate modification is found at K22. Residue K22 forms a Glycyl lysine isopeptide (Lys-Gly) (interchain with G-Cter in SUMO2); alternate linkage. K22 is covalently cross-linked (Glycyl lysine isopeptide (Lys-Gly) (interchain with G-Cter in ubiquitin); alternate). The Ca(2+) site is built by D23, D25, T27, and E32. Residue T45 is modified to Phosphothreonine; by CaMK4. D57, D59, N61, T63, and E68 together coordinate Ca(2+). The interval 77 to 149 (MKDTDSEEEI…EEFVQMMTAK (73 aa)) is necessary and sufficient for interaction with PCP4. A Phosphoserine modification is found at S82. D94 contributes to the Ca(2+) binding site. K95 bears the N6-acetyllysine mark. The Ca(2+) site is built by D96, N98, and Y100. Y100 is subject to Phosphotyrosine. Position 102 is a phosphoserine (S102). E105 contacts Ca(2+). T111 is subject to Phosphothreonine. K116 is subject to N6,N6,N6-trimethyllysine; alternate. K116 is subject to N6-methyllysine; alternate. Ca(2+) contacts are provided by D130, D132, D134, and Q136. At Y139 the chain carries Phosphotyrosine. E141 contributes to the Ca(2+) binding site.

It belongs to the calmodulin family. Homotetramer. Interacts with MYO1C, MYO5A and RRAD. Interacts with MYO10. Interacts with CEP97, CCP110, TTN/titin and SRY. Interacts with USP6; the interaction is calcium dependent. Interacts with CDK5RAP2. Interacts with SCN5A. Interacts with RYR1. Interacts with FCHO1. Interacts with MIP in a 1:2 stoichiometry; the interaction with the cytoplasmic domains from two MIP subunits promotes MIP water channel closure. Interacts with ORAI1; this may play a role in the regulation of ORAI1-mediated calcium transport. Interacts with IQCF1. Interacts with SYT7. Interacts with CEACAM1 (via cytoplasmic domain); this interaction is in a calcium dependent manner and reduces homophilic cell adhesion through dissociation of dimer. Interacts with RYR2; regulates RYR2 calcium-release channel activity. Interacts with PCP4; regulates calmodulin calcium-binding. Interacts with the heterotetrameric KCNQ2 and KCNQ3 channel; the interaction is calcium-independent, constitutive and participates in the proper assembly of a functional heterotetrameric M channel. Interacts with alpha-synuclein/SNCA. Interacts with SLC9A1 in a calcium-dependent manner. In the absence of Ca(+2), interacts with GIMAP4 (via IQ domain). Interacts with SCN8A; the interaction modulates the inactivation rate of SCN8A. Interaction with KIF1A; the interaction is increased in presence of calcium and increases neuronal dense core vesicles motility. Interacts with KCNN3. Interacts with KCNQ1 (via C-terminus); forms a heterooctameric structure (with 4:4 KCNQ1:CALM stoichiometry) in a calcium-independent manner. Interacts with PIK3C3; the interaction modulates PIK3C3 kinase activity. Interacts with HINT1; interaction increases in the presence of calcium ions. Interacts with HINT3. Interacts with GARIN2; in mature sperm flagella. Interacts with IQUB. Interacts with SLC26A5 (via STAS domain); this interaction is calcium-dependent and the STAS domain interacts with only one lobe of CALM which is an elongated conformation. Ca(2+)-bound CALM1 binds CNGA1:CNGB1 channel (via CaM1 and CaM2 regions); this interaction modulates the affinity of the channel for cNMPs in response to intracellular Ca(2+) levels. Interacts with ITPR1; this interaction inhibits inositol 1,4,5 trisphosphate binding in both the presence and absence of calcium and 1,4,5 trisphosphate-induced calcium release in the presence of calcium. Component of the SIFI complex. Interacts with KCNN4; this interaction allows channel opening. Interacts with KCNN2; this interaction regulates the channel activity through calcium-binding. As to quaternary structure, (Microbial infection) Interacts with Rubella virus protease/methyltransferase p150. In terms of assembly, (Microbial infection) Interacts with Legionella pneumophila glutamylase SidJ. (Microbial infection) Interacts with C.violaceum CopC. C.violaceum CopC interacts specifically with the apo form of calmodulin. As to quaternary structure, (Microbial infection) Interacts with S.flexneri OspC1 and OspC3. S.flexneri OspC1 and OspC3 interact specifically with the apo form of calmodulin and prevents calcium-binding. Ubiquitination results in a strongly decreased activity. Post-translationally, phosphorylation results in a decreased activity.

The protein localises to the cytoplasm. The protein resides in the cytoskeleton. It is found in the spindle. Its subcellular location is the spindle pole. It localises to the microtubule organizing center. The protein localises to the centrosome. The protein resides in the cell projection. It is found in the cilium. Its subcellular location is the flagellum. With respect to regulation, (Microbial infection) Inactivated by S.flexneri OspC1 and OspC3 proteins, which specifically bind the apo-form of calmodulin, thereby preventing calcium-binding and activity. Calmodulin acts as part of a calcium signal transduction pathway by mediating the control of a large number of enzymes, ion channels, aquaporins and other proteins through calcium-binding. Calcium-binding is required for the activation of calmodulin. Among the enzymes to be stimulated by the calmodulin-calcium complex are a number of protein kinases, such as myosin light-chain kinases and calmodulin-dependent protein kinase type II (CaMK2), and phosphatases. Together with CCP110 and centrin, is involved in a genetic pathway that regulates the centrosome cycle and progression through cytokinesis. Is a regulator of voltage-dependent L-type calcium channels. Mediates calcium-dependent inactivation of CACNA1C. Positively regulates calcium-activated potassium channel activity of KCNN2. Forms a potassium channel complex with KCNQ1 and regulates electrophysiological activity of the channel via calcium-binding. Acts as a sensor to modulate the endoplasmic reticulum contacts with other organelles mediated by VMP1:ATP2A2. Functionally, (Microbial infection) Required for Legionella pneumophila SidJ glutamylase activity. In terms of biological role, (Microbial infection) Required for C.violaceum CopC and S.flexneri OspC3 arginine ADP-riboxanase activity. This is Calmodulin-1 from Homo sapiens (Human).